An 88-amino-acid chain; its full sequence is Phosphocarrier protein HPr (88 aa).

An HPr domain is found at 1-88 (MKTQQFTVID…TLLTEMGLAQ (88 aa)). The Pros-phosphohistidine intermediate role is filled by His-15. Ser-46 is subject to Phosphoserine; by HPrK/P.

The protein belongs to the HPr family.

It localises to the cytoplasm. With respect to regulation, phosphorylation on Ser-46 inhibits the phosphoryl transfer from enzyme I to HPr. Functionally, general (non sugar-specific) component of the phosphoenolpyruvate-dependent sugar phosphotransferase system (sugar PTS). This major carbohydrate active-transport system catalyzes the phosphorylation of incoming sugar substrates concomitantly with their translocation across the cell membrane. The phosphoryl group from phosphoenolpyruvate (PEP) is transferred to the phosphoryl carrier protein HPr by enzyme I. Phospho-HPr then transfers it to the PTS EIIA domain. P-Ser-HPr interacts with the catabolite control protein A (CcpA), forming a complex that binds to DNA at the catabolite response elements cre, operator sites preceding a large number of catabolite-regulated genes. Thus, P-Ser-HPr is a corepressor in carbon catabolite repression (CCR), a mechanism that allows bacteria to coordinate and optimize the utilization of available carbon sources. P-Ser-HPr also plays a role in inducer exclusion, in which it probably interacts with several non-PTS permeases and inhibits their transport activity. This Lysinibacillus sphaericus (Bacillus sphaericus) protein is Phosphocarrier protein HPr (ptsH).